We begin with the raw amino-acid sequence, 147 residues long: Large ribosomal subunit protein bL9 (147 aa).

This sequence belongs to the bacterial ribosomal protein bL9 family.

Its function is as follows. Binds to the 23S rRNA. In Campylobacter jejuni subsp. jejuni serotype O:23/36 (strain 81-176), this protein is Large ribosomal subunit protein bL9.